Here is a 176-residue protein sequence, read N- to C-terminus: RNA polymerase sigma factor SigO (176 aa).

The Polymerase core binding motif lies at 30 to 43 (DARSLDELFKQFYK). A DNA-binding region (H-T-H motif) is located at residues 139-158 (MQEIADSLGESRQNISNIHK).

The protein belongs to the sigma-70 factor family. As to quaternary structure, interacts with RNA polymerase.

Functionally, sigma factors are initiation factors that promote the attachment of RNA polymerase to specific initiation sites and are then released. Together with its coactivator RsoA, positively regulates the expression of at least three operons, including oxdC-yvrL, sigO-rsoA and yvrJ. Required for the acid stress-dependent induction of the oxalate decarboxylase oxdC. This chain is RNA polymerase sigma factor SigO (sigO), found in Bacillus subtilis (strain 168).